Consider the following 314-residue polypeptide: Ribosomal protein uL3 glutamine methyltransferase (314 aa).

It belongs to the protein N5-glutamine methyltransferase family. PrmB subfamily.

It carries out the reaction L-glutaminyl-[ribosomal protein uL3] + S-adenosyl-L-methionine = N(5)-methyl-L-glutaminyl-[ribosomal protein uL3] + S-adenosyl-L-homocysteine + H(+). In terms of biological role, methylates large ribosomal subunit protein uL3 on a specific glutamine residue. The protein is Ribosomal protein uL3 glutamine methyltransferase of Francisella tularensis subsp. tularensis (strain SCHU S4 / Schu 4).